We begin with the raw amino-acid sequence, 280 residues long: 3-methyl-2-oxobutanoate hydroxymethyltransferase (280 aa).

Mg(2+)-binding residues include Asp-45 and Asp-84. Residues 45–46 (DS), Asp-84, and Lys-114 each bind 3-methyl-2-oxobutanoate. Glu-116 contacts Mg(2+). The active-site Proton acceptor is the Glu-183.

The protein belongs to the PanB family. As to quaternary structure, homodecamer; pentamer of dimers. Mg(2+) is required as a cofactor.

The protein resides in the cytoplasm. It carries out the reaction 3-methyl-2-oxobutanoate + (6R)-5,10-methylene-5,6,7,8-tetrahydrofolate + H2O = 2-dehydropantoate + (6S)-5,6,7,8-tetrahydrofolate. Its pathway is cofactor biosynthesis; (R)-pantothenate biosynthesis; (R)-pantoate from 3-methyl-2-oxobutanoate: step 1/2. Catalyzes the reversible reaction in which hydroxymethyl group from 5,10-methylenetetrahydrofolate is transferred onto alpha-ketoisovalerate to form ketopantoate. The protein is 3-methyl-2-oxobutanoate hydroxymethyltransferase of Clostridium kluyveri (strain ATCC 8527 / DSM 555 / NBRC 12016 / NCIMB 10680 / K1).